Consider the following 159-residue polypeptide: Small ribosomal subunit protein uS7m (159 aa).

The protein belongs to the universal ribosomal protein uS7 family. Part of the small ribosomal subunit.

Its subcellular location is the mitochondrion. One of the primary rRNA binding proteins, it binds directly to the small rRNA where it nucleates assembly of the head domain of the small subunit. The sequence is that of Small ribosomal subunit protein uS7m (RPS7) from Reclinomonas americana.